Here is a 126-residue protein sequence, read N- to C-terminus: Glycine cleavage system H protein (126 aa).

The 83-residue stretch at 22–104 folds into the Lipoyl-binding domain; the sequence is VATIGITEYA…YEKAWMVKVE (83 aa). Position 63 is an N6-lipoyllysine (lysine 63).

It belongs to the GcvH family. The glycine cleavage system is composed of four proteins: P, T, L and H. (R)-lipoate serves as cofactor.

In terms of biological role, the glycine cleavage system catalyzes the degradation of glycine. The H protein shuttles the methylamine group of glycine from the P protein to the T protein. Functionally, is also involved in protein lipoylation via its role as an octanoyl/lipoyl carrier protein intermediate. The polypeptide is Glycine cleavage system H protein (Staphylococcus aureus (strain MSSA476)).